A 2537-amino-acid polypeptide reads, in one-letter code: Histone-lysine N-methyltransferase SETD2 (2537 aa).

The span at 1–12 shows a compositional bias: pro residues; it reads MKPLPSQQPPPK. 5 disordered regions span residues 1 to 31, 91 to 142, 156 to 483, 510 to 554, and 607 to 629; these read MKPLPSQQPPPKMGDFYDPEHPTPEEEENEA, TALS…ELGR, PQLA…RDLR, YTSK…STSR, and SEREKTGSPTPSNQLNDSPTFKK. The segment covering 18 to 31 has biased composition (basic and acidic residues); that stretch reads DPEHPTPEEEENEA. Residues 91–103 show a composition bias toward polar residues; the sequence is TALSNEKQSDSPN. A Phosphoserine modification is found at S132. Residues 156–166 show a composition bias toward low complexity; sequence PQLAASTTAAS. A compositionally biased stretch (pro residues) spans 187-205; the sequence is PSSPPPPPPPPQASSPSPP. Residue S242 is modified to Phosphoserine. Positions 264 to 291 are enriched in basic and acidic residues; the sequence is LEEHTVQTLKEQADHLLQKEDSHIGKEE. Residues S322, S324, and S345 each carry the phosphoserine modification. Composition is skewed to basic and acidic residues over residues 336-401, 422-433, 440-468, and 510-528; these read RSHD…ERDR, RSERSHYYDSER, PYRERTRYSRPYTDNRARESSDSEDEYKK, and YTSKLERESKRTSEHETIK. A Glycyl lysine isopeptide (Lys-Gly) (interchain with G-Cter in SUMO2) cross-link involves residue K360. S423 is modified (phosphoserine). 3 positions are modified to phosphoserine: S532, S614, and S624. A compositionally biased stretch (polar residues) spans 613 to 625; the sequence is GSPTPSNQLNDSP. T626 carries the post-translational modification Phosphothreonine. At S633 the chain carries Phosphoserine. K637 is covalently cross-linked (Glycyl lysine isopeptide (Lys-Gly) (interchain with G-Cter in SUMO2)). Residues S697, S707, S743, and S753 each carry the phosphoserine modification. The interval 729–749 is disordered; that stretch reads RDSDDTCRQHNTSKSPFREME. K775 is covalently cross-linked (Glycyl lysine isopeptide (Lys-Gly) (interchain with G-Cter in SUMO2)). 4 disordered regions span residues 829 to 894, 941 to 974, 1015 to 1078, and 1135 to 1185; these read CDNR…PTLD, QEAQEEGNSILHERRGRPEIPLDEEQRGHTHISD, EDYS…HYSD, and AHAQ…EDLP. Residues 830 to 847 are compositionally biased toward basic and acidic residues; sequence DNREPTDRHSENTCDEYK. The segment covering 849–858 has biased composition (polar residues); it reads SIGSTSSASH. Positions 867–883 are enriched in low complexity; sequence PIGSSGISSLQSPPSGI. Residues 951-974 are compositionally biased toward basic and acidic residues; that stretch reads LHERRGRPEIPLDEEQRGHTHISD. The segment covering 1026 to 1037 has biased composition (acidic residues); it reads DESDSEDTESDD. A Phosphoserine modification is found at S1077. The span at 1150–1165 shows a compositional bias: basic and acidic residues; sequence SRSDHLGHLNPEDTLR. The residue at position 1201 (S1201) is a Phosphoserine. 3 disordered regions span residues 1232-1254, 1280-1346, and 1366-1396; these read GWDFSQQERPTTTYQQPDSSYGT, WDPR…APEI, and NFEKNDIKERGPPKKRRQELESDSESDGELQ. Polar residues-rich tracts occupy residues 1235–1254 and 1319–1329; these read FSQQERPTTTYQQPDSSYGT and RSGSHFSSPSN. Basic and acidic residues predominate over residues 1366–1377; that stretch reads NFEKNDIKERGP. A phosphoserine mark is found at S1387, S1389, and S1391. The interval 1392–1688 is interaction with TUBA1A; that stretch reads DGELQARKKV…KKERSRKKDS (297 aa). The AWS domain occupies 1468-1522; the sequence is IKRMQCECTPLSKDERAQGEVACGEDCLNRLLMIECSSRCPNGDYCSNRRFQRKQ. Positions 1473, 1475, 1490, 1494, 1503, 1507, and 1513 each coordinate Zn(2+). The SET domain occupies 1524–1641; sequence ADVEVILTEK…SGSELTFDYQ (118 aa). Residues 1534 to 1536, 1577 to 1579, and 1602 to 1603 each bind S-adenosyl-L-methionine; these read KGW, HYY, and NH. Zn(2+) is bound at residue C1605. One can recognise a Post-SET domain in the interval 1648–1664; the sequence is EAQKCFCGSANCRGYLG. Q1650 contacts S-adenosyl-L-methionine. A Zn(2+)-binding site is contributed by C1652. F1653 contacts S-adenosyl-L-methionine. Residues C1654 and C1659 each contribute to the Zn(2+) site. S1670, S1818, and S1819 each carry phosphoserine. The segment at 1806 to 1848 is disordered; sequence TAVPQLSEGDGYSSENTSRAHTPLNTPDPSAKPSTEMDTDTPK. Over residues 1818-1833 the composition is skewed to polar residues; the sequence is SSENTSRAHTPLNTPD. T1827 and T1846 each carry phosphothreonine. S1862 and S1926 each carry phosphoserine. 2 disordered regions span residues 1914 to 1981 and 1993 to 2110; these read SEAT…DISD and LKEV…AQKQ. Residues 1934–1946 are compositionally biased toward basic and acidic residues; the sequence is TEPKDSNGTKLEE. A compositionally biased stretch (acidic residues) spans 1947–1964; sequence TIAEETPSQDEEEGVSDV. S1954, S1962, and S1969 each carry phosphoserine. 3 stretches are compositionally biased toward basic and acidic residues: residues 1965 to 1978, 1993 to 2020, and 2032 to 2045; these read ESERSQEPPDKTVD, LKEVYRIPKKSQTEKESTVAERGRDAAA, and RSRERDPDKQSQNK. 2 positions are modified to phosphoserine: S2053 and S2055. Composition is skewed to basic and acidic residues over residues 2063–2073 and 2084–2108; these read RGTKRPDDRYD and KDRNKLSTEERRKLFEQEVAQREAQ. Residues 2090 to 2119 adopt a coiled-coil conformation; it reads STEERRKLFEQEVAQREAQKQQQQMQNLGM. The interval 2110-2339 is low charge region; sequence QQQQMQNLGM…APGQPQSLQP (230 aa). Positions 2362–2395 constitute a WW domain; that stretch reads IVLPPNWKTARDPEGKIYYYHVITRQTQWDPPTW. Positions 2412–2438 are disordered; it reads LGTPTYDENPMKTSKKPKTAEADTSSE. Residues 2430–2537 form an interaction with POLR2A region; it reads TAEADTSSEL…YKPKEDTELE (108 aa).

This sequence belongs to the class V-like SAM-binding methyltransferase superfamily. Histone-lysine methyltransferase family. SET2 subfamily. As to quaternary structure, specifically interacts with hyperphosphorylated C-terminal domain (CTD) of RNA polymerase II large subunit (POLR2A): binds to CTD heptad repeats doubly phosphorylated on 'Ser-2' and 'Ser-5' of each heptad. Interacts with HTT. Interacts with IWS1. Interacts with p53/TP53; leading to regulate p53/TP53 target genes. Component of a complex with HNRNPL. Interacts with TUBA1A; the interaction is independent on alpha-tubulin acetylation on 'Lys-40'. In terms of processing, may be automethylated.

The protein localises to the nucleus. The protein resides in the chromosome. It catalyses the reaction L-lysyl(36)-[histone H3] + 3 S-adenosyl-L-methionine = N(6),N(6),N(6)-trimethyl-L-lysyl(36)-[histone H3] + 3 S-adenosyl-L-homocysteine + 3 H(+). The catalysed reaction is L-lysyl-[protein] + S-adenosyl-L-methionine = N(6)-methyl-L-lysyl-[protein] + S-adenosyl-L-homocysteine + H(+). It carries out the reaction L-lysyl-[protein] + 3 S-adenosyl-L-methionine = N(6),N(6),N(6)-trimethyl-L-lysyl-[protein] + 3 S-adenosyl-L-homocysteine + 3 H(+). With respect to regulation, specifically inhibited by sinefungin derivatives. Its function is as follows. Histone methyltransferase that specifically trimethylates 'Lys-36' of histone H3 (H3K36me3) using dimethylated 'Lys-36' (H3K36me2) as substrate. It is capable of trimethylating unmethylated H3K36 (H3K36me0) in vitro. Represents the main enzyme generating H3K36me3, a specific tag for epigenetic transcriptional activation. Plays a role in chromatin structure modulation during elongation by coordinating recruitment of the FACT complex and by interacting with hyperphosphorylated POLR2A. Acts as a key regulator of DNA mismatch repair in G1 and early S phase by generating H3K36me3, a mark required to recruit MSH6 subunit of the MutS alpha complex: early recruitment of the MutS alpha complex to chromatin to be replicated allows a quick identification of mismatch DNA to initiate the mismatch repair reaction. Required for DNA double-strand break repair in response to DNA damage: acts by mediating formation of H3K36me3, promoting recruitment of RAD51 and DNA repair via homologous recombination (HR). Acts as a tumor suppressor. H3K36me3 also plays an essential role in the maintenance of a heterochromatic state, by recruiting DNA methyltransferase DNMT3A. H3K36me3 is also enhanced in intron-containing genes, suggesting that SETD2 recruitment is enhanced by splicing and that splicing is coupled to recruitment of elongating RNA polymerase. Required during angiogenesis. Required for endoderm development by promoting embryonic stem cell differentiation toward endoderm: acts by mediating formation of H3K36me3 in distal promoter regions of FGFR3, leading to regulate transcription initiation of FGFR3. In addition to histones, also mediates methylation of other proteins, such as tubulins and STAT1. Trimethylates 'Lys-40' of alpha-tubulins such as TUBA1B (alpha-TubK40me3); alpha-TubK40me3 is required for normal mitosis and cytokinesis and may be a specific tag in cytoskeletal remodeling. Involved in interferon-alpha-induced antiviral defense by mediating both monomethylation of STAT1 at 'Lys-525' and catalyzing H3K36me3 on promoters of some interferon-stimulated genes (ISGs) to activate gene transcription. The sequence is that of Histone-lysine N-methyltransferase SETD2 from Mus musculus (Mouse).